Here is a 322-residue protein sequence, read N- to C-terminus: Probable 5-dehydro-4-deoxyglucarate dehydratase 2 (322 aa).

The protein belongs to the DapA family.

The enzyme catalyses 5-dehydro-4-deoxy-D-glucarate + H(+) = 2,5-dioxopentanoate + CO2 + H2O. It participates in carbohydrate acid metabolism; D-glucarate degradation; 2,5-dioxopentanoate from D-glucarate: step 2/2. This is Probable 5-dehydro-4-deoxyglucarate dehydratase 2 from Streptomyces coelicolor (strain ATCC BAA-471 / A3(2) / M145).